The primary structure comprises 578 residues: 65-kDa microtubule-associated protein 2 (578 aa).

Coiled-coil stretches lie at residues 64 to 84, 151 to 184, 235 to 257, 290 to 312, and 461 to 489; these read AELL…TTAL, DETD…VLEF, TLKE…LTDL, ALAL…LKSS, and AMLD…QQEQ. A compositionally biased stretch (basic and acidic residues) spans 473–494; it reads REDEKRRLKEQKKQQEQPHTDQ. A disordered region spans residues 473–578; that stretch reads REDEKRRLKE…SRADPVMASP (106 aa). Serine 503 and serine 532 each carry phosphoserine. Polar residues predominate over residues 549-558; it reads KIASPSNIVA. Phosphoserine is present on residues serine 566, serine 569, and serine 577.

The protein belongs to the MAP65/ASE1 family. In terms of assembly, forms a dimer. Binds to microtubules (MT). Bundles polymerized MT via the formation of 25-nm crossbridges with centrally located endocytic MT.

Its subcellular location is the nucleus. It is found in the cytoplasm. The protein resides in the cytoskeleton. The protein localises to the spindle pole. It localises to the phragmoplast. Its function is as follows. Microtubule-associated protein that stabilize microtubules (MT). Involved in the regulation of MT organization and dynamics. Confers MT resistance to the drug propyzamide and cold conditions. The protein is 65-kDa microtubule-associated protein 2 (MAP65-2) of Arabidopsis thaliana (Mouse-ear cress).